Consider the following 156-residue polypeptide: Cell division protein SepF (156 aa).

Belongs to the SepF family. Homodimer. Interacts with FtsZ.

The protein localises to the cytoplasm. Functionally, cell division protein that is part of the divisome complex and is recruited early to the Z-ring. Probably stimulates Z-ring formation, perhaps through the cross-linking of FtsZ protofilaments. Its function overlaps with FtsA. In Ruminiclostridium cellulolyticum (strain ATCC 35319 / DSM 5812 / JCM 6584 / H10) (Clostridium cellulolyticum), this protein is Cell division protein SepF.